The following is a 92-amino-acid chain: Transcription factor PRE5 (92 aa).

Residues 4–59 form the bHLH domain; that stretch reads RRSRQTSNASRISDDQMIDLVSKLRQFLPEIHERRRSDKVSASKVLQETCNYIRKL.

The protein belongs to the bHLH protein family. In terms of assembly, interacts with IBH1.

Its subcellular location is the nucleus. In terms of biological role, atypical and probable non DNA-binding bHLH transcription factor that integrates multiple signaling pathways to regulate cell elongation and plant development. May have a regulatory role in various aspects of gibberellin-dependent growth and development. The polypeptide is Transcription factor PRE5 (PRE5) (Arabidopsis thaliana (Mouse-ear cress)).